The following is a 263-amino-acid chain: Shikimate dehydrogenase (NADP(+)) (263 aa).

Residues 16-18 (SKS) and T65 contribute to the shikimate site. K69 acts as the Proton acceptor in catalysis. Shikimate is bound by residues N90 and D105. Residues 125-129 (GSGGS) and L208 contribute to the NADP(+) site. Residue Y210 participates in shikimate binding. G230 contacts NADP(+).

It belongs to the shikimate dehydrogenase family. Homodimer.

The enzyme catalyses shikimate + NADP(+) = 3-dehydroshikimate + NADPH + H(+). It participates in metabolic intermediate biosynthesis; chorismate biosynthesis; chorismate from D-erythrose 4-phosphate and phosphoenolpyruvate: step 4/7. With respect to regulation, inhibited by curcumin, 3-(2-naphthyloxy)-4-oxo-2-(trifluoromethyl)-4H-chromen-7-yl 3-chlorobenzoate, butyl 2-{[3-(2-naphthyloxy)-4-oxo-2-(trifluoromethyl)-4H-chromen-7-yl]oxy}propanoate, 2-({2-[(2-{[2-(2,3-dimethylanilino)-2-oxoethyl]sulfanyl}-1,3-benzothiazol-6-yl)amino]-2-oxoethyl}sulfanyl)-N-(2-naphthyl)acetamide, and maesaquinone diacetate. Involved in the biosynthesis of the chorismate, which leads to the biosynthesis of aromatic amino acids. Catalyzes the reversible NADPH linked reduction of 3-dehydroshikimate (DHSA) to yield shikimate (SA). It can also use NAD to oxidize shikimate. The sequence is that of Shikimate dehydrogenase (NADP(+)) from Helicobacter pylori (Campylobacter pylori).